The following is a 398-amino-acid chain: Succinate--CoA ligase [ADP-forming] subunit beta (398 aa).

In terms of domain architecture, ATP-grasp spans Lys9–Glu254. Residues Lys46, Gly53 to Gly55, Glu109, Ala112, and Glu117 each bind ATP. Mg(2+)-binding residues include Asn209 and Asp223. Residues Asn274 and Gly331–Met333 each bind substrate.

Belongs to the succinate/malate CoA ligase beta subunit family. Heterotetramer of two alpha and two beta subunits. Mg(2+) is required as a cofactor.

It catalyses the reaction succinate + ATP + CoA = succinyl-CoA + ADP + phosphate. The catalysed reaction is GTP + succinate + CoA = succinyl-CoA + GDP + phosphate. It functions in the pathway carbohydrate metabolism; tricarboxylic acid cycle; succinate from succinyl-CoA (ligase route): step 1/1. Functionally, succinyl-CoA synthetase functions in the citric acid cycle (TCA), coupling the hydrolysis of succinyl-CoA to the synthesis of either ATP or GTP and thus represents the only step of substrate-level phosphorylation in the TCA. The beta subunit provides nucleotide specificity of the enzyme and binds the substrate succinate, while the binding sites for coenzyme A and phosphate are found in the alpha subunit. This chain is Succinate--CoA ligase [ADP-forming] subunit beta, found in Rhizobium meliloti (strain 1021) (Ensifer meliloti).